Consider the following 433-residue polypeptide: ATP-dependent protease ATPase subunit HslU (433 aa).

ATP is bound by residues Ile-18, Gly-60–Glu-65, Asp-246, Glu-311, and Arg-383.

The protein belongs to the ClpX chaperone family. HslU subfamily. In terms of assembly, a double ring-shaped homohexamer of HslV is capped on each side by a ring-shaped HslU homohexamer. The assembly of the HslU/HslV complex is dependent on binding of ATP.

Its subcellular location is the cytoplasm. Its function is as follows. ATPase subunit of a proteasome-like degradation complex; this subunit has chaperone activity. The binding of ATP and its subsequent hydrolysis by HslU are essential for unfolding of protein substrates subsequently hydrolyzed by HslV. HslU recognizes the N-terminal part of its protein substrates and unfolds these before they are guided to HslV for hydrolysis. This chain is ATP-dependent protease ATPase subunit HslU, found in Cereibacter sphaeroides (strain KD131 / KCTC 12085) (Rhodobacter sphaeroides).